The chain runs to 1399 residues: DNA-directed RNA polymerase subunit beta' (1399 aa).

Zn(2+)-binding residues include Cys-70, Cys-72, Cys-85, and Cys-88. Mg(2+)-binding residues include Asp-460, Asp-462, and Asp-464. The Zn(2+) site is built by Cys-814, Cys-888, Cys-895, and Cys-898. Residues 1367-1399 (SERKRQRDLGKPQRVSASEAEAALTEALNSSGN) are disordered. The segment covering 1382-1399 (SASEAEAALTEALNSSGN) has biased composition (low complexity).

Belongs to the RNA polymerase beta' chain family. The RNAP catalytic core consists of 2 alpha, 1 beta, 1 beta' and 1 omega subunit. When a sigma factor is associated with the core the holoenzyme is formed, which can initiate transcription. Requires Mg(2+) as cofactor. It depends on Zn(2+) as a cofactor.

It carries out the reaction RNA(n) + a ribonucleoside 5'-triphosphate = RNA(n+1) + diphosphate. In terms of biological role, DNA-dependent RNA polymerase catalyzes the transcription of DNA into RNA using the four ribonucleoside triphosphates as substrates. The sequence is that of DNA-directed RNA polymerase subunit beta' from Pseudomonas aeruginosa (strain UCBPP-PA14).